Reading from the N-terminus, the 350-residue chain is MRVIDGSYGEGGGQILRTAVALSVITGEPIKIINIRAKRSNPGLRPQHLHGILALKELSDAKVKGAKEGSTELEFYPKSTRVRHVKVLIKTAGSISLVLQALLPAMVFAEEEVTFEITGGTDVAWSPPVDYLKHITLYALEKLGIKVEIEIRRRGHYPRGGGFVIGKVYPWGTKRPLVARTFDKIYSFEGISHAVRLPSHVAIRQAKAAKEALERVYPSIPIKIHEEYYEQGKDPHFGPGSGIVIWANTDVLRLGGDALGERGKPAEIVGREAAKALIEQLGPRHAVDKFLGDQLIPFLTFAGGDIWVSEVTKHLITNVWVVEQFFGRVFEMEGEIGKPGKVRVVKKVEL.

Residues glutamine 100 and 290 to 294 each bind ATP; that span reads FLGDQ. The Tele-AMP-histidine intermediate role is filled by histidine 314.

It belongs to the RNA 3'-terminal cyclase family. Type 1 subfamily.

It localises to the cytoplasm. The catalysed reaction is a 3'-end 3'-phospho-ribonucleotide-RNA + ATP = a 3'-end 2',3'-cyclophospho-ribonucleotide-RNA + AMP + diphosphate. In terms of biological role, catalyzes the conversion of 3'-phosphate to a 2',3'-cyclic phosphodiester at the end of RNA. The mechanism of action of the enzyme occurs in 3 steps: (A) adenylation of the enzyme by ATP; (B) transfer of adenylate to an RNA-N3'P to produce RNA-N3'PP5'A; (C) and attack of the adjacent 2'-hydroxyl on the 3'-phosphorus in the diester linkage to produce the cyclic end product. The biological role of this enzyme is unknown but it is likely to function in some aspects of cellular RNA processing. This is RNA 3'-terminal phosphate cyclase from Thermococcus sibiricus (strain DSM 12597 / MM 739).